Consider the following 349-residue polypeptide: Early nodulin-like protein 2 (349 aa).

Positions 1 to 28 (MTFLKMKSLSFFFTILLSLSTLFTISNA) are cleaved as a signal peptide. The Phytocyanin domain maps to 29 to 130 (RKFNVGGSGA…GQKLNVVVIS (102 aa)). An intrachain disulfide couples Cys-84 to Cys-118. Positions 136–330 (TAQSPHAAAP…GQKKSSANGM (195 aa)) are disordered. 2 stretches are compositionally biased toward low complexity: residues 145–201 (PGSS…SPPG) and 224–234 (TSPVSPSSAPM). A compositionally biased stretch (polar residues) spans 249–260 (IPPSSAPMTSPP). Over residues 263-312 (MAPKSSSPVSNSPTVSPSLAPGGSTSSSPSDSPSGSAMGPSGDGPSAAGD) the composition is skewed to low complexity. Ser-325 carries the GPI-anchor amidated serine lipid modification. A propeptide spans 326–349 (SANGMTVMSITTVLSLVLTIFLSA) (removed in mature form).

The protein belongs to the early nodulin-like (ENODL) family. Mostly expressed in leaves and roots, and, to a lower extent, in seedlings, stems and flowers, but barely in seeds.

The protein localises to the cell membrane. Functionally, may act as a carbohydrate transporter. The sequence is that of Early nodulin-like protein 2 from Arabidopsis thaliana (Mouse-ear cress).